An 87-amino-acid polypeptide reads, in one-letter code: U3-theraphotoxin-Hhn1a 8 (87 aa).

Positions 1-24 are cleaved as a signal peptide; sequence MVNMKASMFLTFAGLVLLFVVCYA. The propeptide occupies 25–52; sequence SGSEEKEFPKEMLSSIFAVDNDFKQEER. 3 cysteine pairs are disulfide-bonded: C54-C67, C61-C72, and C66-C79.

This sequence belongs to the neurotoxin 10 (Hwtx-1) family. 51 (Hntx-8) subfamily. Hntx-8 sub-subfamily. Expressed by the venom gland.

It localises to the secreted. Functionally, ion channel inhibitor. The polypeptide is U3-theraphotoxin-Hhn1a 8 (Cyriopagopus hainanus (Chinese bird spider)).